The following is a 179-amino-acid chain: 3-hydroxyanthranilate 3,4-dioxygenase (179 aa).

Arg-47 contributes to the O2 binding site. The Fe cation site is built by His-51, Glu-57, and His-96. Position 57 (Glu-57) interacts with substrate. Positions 100 and 110 each coordinate substrate. Residues Cys-125, Cys-128, Cys-162, and Cys-165 each contribute to the Fe cation site.

Belongs to the 3-HAO family. Fe(2+) serves as cofactor.

The catalysed reaction is 3-hydroxyanthranilate + O2 = (2Z,4Z)-2-amino-3-carboxymuconate 6-semialdehyde. The protein operates within cofactor biosynthesis; NAD(+) biosynthesis; quinolinate from L-kynurenine: step 3/3. Catalyzes the oxidative ring opening of 3-hydroxyanthranilate to 2-amino-3-carboxymuconate semialdehyde, which spontaneously cyclizes to quinolinate. The protein is 3-hydroxyanthranilate 3,4-dioxygenase of Bacillus cereus (strain 03BB102).